A 335-amino-acid chain; its full sequence is Nucleoid-associated protein PSEEN4449 (335 aa).

This sequence belongs to the YejK family.

It localises to the cytoplasm. The protein resides in the nucleoid. In Pseudomonas entomophila (strain L48), this protein is Nucleoid-associated protein PSEEN4449.